The sequence spans 124 residues: Histone H2A (124 aa).

The segment covering 1 to 18 (MSGRGKSGKARTKAKSRS) has biased composition (basic residues). A disordered region spans residues 1–21 (MSGRGKSGKARTKAKSRSSRA). An N-acetylserine modification is found at Ser2. A Phosphoserine modification is found at Ser2. Gln104 bears the N5-methylglutamine mark. Lys119 participates in a covalent cross-link: Glycyl lysine isopeptide (Lys-Gly) (interchain with G-Cter in ubiquitin).

This sequence belongs to the histone H2A family. The nucleosome is a histone octamer containing two molecules each of H2A, H2B, H3 and H4 assembled in one H3-H4 heterotetramer and two H2A-H2B heterodimers. The octamer wraps approximately 147 bp of DNA. In terms of processing, monoubiquitination of Lys-119 gives a specific tag for epigenetic transcriptional repression. Post-translationally, phosphorylation of Ser-2 directly represses transcription.

It is found in the nucleus. The protein resides in the chromosome. In terms of biological role, core component of nucleosome. Nucleosomes wrap and compact DNA into chromatin, limiting DNA accessibility to the cellular machineries which require DNA as a template. Histones thereby play a central role in transcription regulation, DNA repair, DNA replication and chromosomal stability. DNA accessibility is regulated via a complex set of post-translational modifications of histones, also called histone code, and nucleosome remodeling. The chain is Histone H2A from Paracentrotus lividus (Common sea urchin).